Consider the following 513-residue polypeptide: Ribonuclease Y (513 aa).

The chain crosses the membrane as a helical span at residues 6–26; sequence YIIIAVVIIIICVILGLYIVD. The KH domain occupies 203–288; sequence TVHVVNLPND…EMVEKAKKEV (86 aa). The 94-residue stretch at 329 to 422 folds into the HD domain; it reads VLKHSIEVSH…VQAADAISAA (94 aa).

Belongs to the RNase Y family.

Its subcellular location is the cell membrane. Endoribonuclease that initiates mRNA decay. The polypeptide is Ribonuclease Y (Clostridium botulinum (strain ATCC 19397 / Type A)).